The sequence spans 126 residues: Small ribosomal subunit protein uS13 (126 aa).

The interval 92-126 (HRMGLPVRGQRTRTNARTRRGRRQTVAGKKKAPGK) is disordered. Residues 101–126 (QRTRTNARTRRGRRQTVAGKKKAPGK) show a composition bias toward basic residues.

This sequence belongs to the universal ribosomal protein uS13 family. As to quaternary structure, part of the 30S ribosomal subunit. Forms a loose heterodimer with protein S19. Forms two bridges to the 50S subunit in the 70S ribosome.

Functionally, located at the top of the head of the 30S subunit, it contacts several helices of the 16S rRNA. In the 70S ribosome it contacts the 23S rRNA (bridge B1a) and protein L5 of the 50S subunit (bridge B1b), connecting the 2 subunits; these bridges are implicated in subunit movement. Contacts the tRNAs in the A and P-sites. The sequence is that of Small ribosomal subunit protein uS13 from Nostoc sp. (strain PCC 7120 / SAG 25.82 / UTEX 2576).